The chain runs to 1620 residues: Putative zinc carboxypeptidase (1620 aa).

The Extracellular segment spans residues 1–1367 (MLFKNEDSGN…SYDFLYFDEN (1367 aa)). Asn-19 is a glycosylation site (N-linked (GlcNAc...) asparagine). The interval 32–74 (RNDNKNNDNEDNKQDDEEKNDEDDNKSNLLLEENEENKRQGDK) is disordered. Basic and acidic residues predominate over residues 33 to 43 (NDNKNNDNEDN). The span at 44 to 55 (KQDDEEKNDEDD) shows a compositional bias: acidic residues. Asn-56 and Asn-102 each carry an N-linked (GlcNAc...) asparagine glycan. Positions 309–328 (GNHYDAHESTNTYDEEKTRE) are disordered. 10 N-linked (GlcNAc...) asparagine glycosylation sites follow: Asn-354, Asn-487, Asn-508, Asn-529, Asn-550, Asn-571, Asn-589, Asn-687, Asn-802, and Asn-1010. Residues 497-559 (VNNLDSTVNY…NSTGNNINNI (63 aa)) are possible malaria epitope. Residues 1004-1261 (GENKKNNGTK…FYVQNYFEGY (258 aa)) form the Peptidase M14 domain. Residues His-1059 and Glu-1062 each contribute to the Zn(2+) site. N-linked (GlcNAc...) asparagine glycans are attached at residues Asn-1064 and Asn-1141. His-1155 contacts Zn(2+). Glu-1229 (proton donor/acceptor) is an active-site residue. The interval 1279–1329 (NIKGDDNINGDDNIKGGDNIKGDDNIKRDDNFQRDDNFQRDDNFQRGDNFH) is disordered. Residues 1368–1388 (LLFMTGVSFGICLFKFINFLS) form a helical membrane-spanning segment. Residues 1389–1620 (YHKSSICRRT…SKRKKVIVIL (232 aa)) are Cytoplasmic-facing. Residues 1560–1620 (PNGKYKGPGF…SKRKKVIVIL (61 aa)) are disordered. The span at 1581 to 1597 (NKNESKTEKKSKTENKS) shows a compositional bias: basic and acidic residues. Residues 1598–1620 (KSKSKNKSKSKNKSKRKKVIVIL) are compositionally biased toward basic residues.

Belongs to the peptidase M14 family. Zn(2+) serves as cofactor.

The protein resides in the membrane. The protein is Putative zinc carboxypeptidase of Plasmodium falciparum (isolate 3D7).